A 237-amino-acid chain; its full sequence is Isoprenyl transferase (237 aa).

Asp14 is a catalytic residue. Asp14 provides a ligand contact to Mg(2+). Substrate contacts are provided by residues 15 to 18, Trp19, Arg27, His31, and 59 to 61; these read GNGR and STE. Asn62 (proton acceptor) is an active-site residue. Substrate contacts are provided by residues Trp63, Arg65, Arg184, and 190 to 192; that span reads RIS. Residue Glu203 participates in Mg(2+) binding.

This sequence belongs to the UPP synthase family. As to quaternary structure, homodimer. Requires Mg(2+) as cofactor.

Catalyzes the condensation of isopentenyl diphosphate (IPP) with allylic pyrophosphates generating different type of terpenoids. The protein is Isoprenyl transferase of Helicobacter hepaticus (strain ATCC 51449 / 3B1).